The following is a 673-amino-acid chain: G-protein-signaling modulator 1 (673 aa).

The mediates association with membranes stretch occupies residues 1-507 (MASPAPPVAE…DLLSKFQSSR (507 aa)). TPR repeat units follow at residues 28 to 61 (CLELALEGERLCKAGDFKAGVAFFEAAVQVGTED), 66 to 99 (SAIYSQLGNAYFYLKEYARALQFHKHDLLLARTI), 106 to 139 (AKASGNLGNTLKVLGRFDEAIVCCQRHLDIAQEQ), 146 to 178 (ARALYNIGNVYHAKGKQLSWNAAQDPGHLPPDV), 180 to 199 (ETLHRASEFYERNLSLVKEL), 206 to 239 (GRAYGNLGNTHYLLGNFTEATTFHKERLAIAKEF), 246 to 279 (RRAYSNLGNAHIFLGRFDVAAEHYKKTLQLSRQL), 286 to 319 (AQACYSLGNTYTLLQDYERAAEYHLRHLVIAQEL), and 326 to 359 (GRACWSLGNAYVSMGSPAQALTFAKKHLQISQEI). Residues 361–485 (DRNGELTARM…VRVQVPRTGI (125 aa)) form an interaction with STK11/LKB1 region. Ser-410 is modified (phosphoserine). Arg-418 is subject to Omega-N-methylarginine. A compositionally biased stretch (basic and acidic residues) spans 420-439 (PLDREQNGETHHTGDWRGPG). Positions 420 to 475 (PLDREQNGETHHTGDWRGPGRDSLPLPMRSRKYQEGPDAIERRPREGSHSPLDSAD) are disordered. Residues Ser-442, Ser-467, Ser-469, Ser-490, and Ser-491 each carry the phosphoserine modification. Residues 451–467 (KYQEGPDAIERRPREGS) show a composition bias toward basic and acidic residues. In terms of domain architecture, GoLoco 1 spans 493 to 515 (EECFFDLLSKFQSSRMDDQRCPL). Residues 508-531 (MDDQRCPLEEGQAGAAEATAAPSV) are disordered. A compositionally biased stretch (low complexity) spans 516 to 528 (EEGQAGAAEATAA). Phosphoserine occurs at positions 543 and 567. GoLoco domains are found at residues 546–568 (TEEFFDLIASSQSRRLDDQRASV), 594–616 (GDEFFNMLIKYQSSRIDDQRCPP), and 628–650 (DEDFFSLIQRVQAKRMDEQRVDL). The interval 644 to 673 (DEQRVDLAGSPEQEASGLPDPQQQCPPGAS) is disordered. Ser-653 bears the Phosphoserine mark. The span at 664–673 (PQQQCPPGAS) shows a compositional bias: polar residues.

It belongs to the GPSM family. Interacts with GNAI1 and GNAI2 preferentially in their GDP-bound state. May also interact with GNAO1. Interacts with INSC/inscuteable and FRMPD1. Interacts with GNAI3. Interacts with STK11/LKB1 and MACF1. Phosphorylation regulates interaction with G(i/o) alpha. In terms of tissue distribution, expressed in neural progenitor cells (at protein level).

It localises to the cytoplasm. The protein resides in the cytosol. The protein localises to the endoplasmic reticulum membrane. It is found in the golgi apparatus membrane. Its subcellular location is the cell membrane. Its function is as follows. Guanine nucleotide dissociation inhibitor (GDI) which functions as a receptor-independent activator of heterotrimeric G-protein signaling. Keeps G(i/o) alpha subunit in its GDP-bound form thus uncoupling heterotrimeric G-proteins signaling from G protein-coupled receptors. Controls spindle orientation and asymmetric cell fate of cerebral cortical progenitors. May also be involved in macroautophagy in intestinal cells. May play a role in drug addiction. This chain is G-protein-signaling modulator 1 (Gpsm1), found in Mus musculus (Mouse).